The sequence spans 206 residues: Protein DEHYDRATION-INDUCED 19 (206 aa).

The residue at position 105 (threonine 105) is a Phosphothreonine. At serine 107 the chain carries Phosphoserine. Residues 142-167 (SSFISPTRSQSSPAPRQTKNVSEDKQ) form a disordered region. A compositionally biased stretch (polar residues) spans 143 to 161 (SFISPTRSQSSPAPRQTKN).

It belongs to the Di19 family. Interacts with ADO2/LKP2, CPK11 and CPK4. Weak interaction with CPK12 and no interactions with CPK1, CPK5 or CPK26. Post-translationally, phosphorylated within the NLS/NES region. In terms of tissue distribution, expressed in seedlings, roots, leaves, stems, flowers and siliques.

The protein localises to the nucleus. The chain is Protein DEHYDRATION-INDUCED 19 (DI19-1) from Arabidopsis thaliana (Mouse-ear cress).